Reading from the N-terminus, the 483-residue chain is V-type proton ATPase subunit H (483 aa).

Phosphoserine is present on S483.

This sequence belongs to the V-ATPase H subunit family. V-ATPase is a heteromultimeric enzyme made up of two complexes: the ATP-hydrolytic V1 complex and the proton translocation V0 complex. The V1 complex consists of three catalytic AB heterodimers that form a heterohexamer, three peripheral stalks each consisting of EG heterodimers, one central rotor including subunits D and F, and the regulatory subunits C and H. The proton translocation complex V0 consists of the proton transport subunit a, a ring of proteolipid subunits c9c'', rotary subunit d, subunits e and f, and the accessory subunits ATP6AP1/Ac45 and ATP6AP2/PRR. Interacts with AP2M1. As to expression, expressed in brain (at protein level).

Its subcellular location is the cytoplasmic vesicle. It is found in the clathrin-coated vesicle membrane. Its function is as follows. Subunit of the V1 complex of vacuolar(H+)-ATPase (V-ATPase), a multisubunit enzyme composed of a peripheral complex (V1) that hydrolyzes ATP and a membrane integral complex (V0) that translocates protons. V-ATPase is responsible for acidifying and maintaining the pH of intracellular compartments and in some cell types, is targeted to the plasma membrane, where it is responsible for acidifying the extracellular environment. Subunit H is essential for V-ATPase activity, but not for the assembly of the complex. Involved in the endocytosis mediated by clathrin-coated pits, required for the formation of endosomes. This is V-type proton ATPase subunit H (ATP6V1H) from Bos taurus (Bovine).